A 232-amino-acid chain; its full sequence is Flagellar L-ring protein (232 aa).

An N-terminal signal peptide occupies residues 1–15 (MKKVLFYVLPFAFFG). The N-palmitoyl cysteine moiety is linked to residue C16. A lipid anchor (S-diacylglycerol cysteine) is attached at C16.

This sequence belongs to the FlgH family. In terms of assembly, the basal body constitutes a major portion of the flagellar organelle and consists of four rings (L,P,S, and M) mounted on a central rod.

It is found in the cell outer membrane. Its subcellular location is the bacterial flagellum basal body. Its function is as follows. Assembles around the rod to form the L-ring and probably protects the motor/basal body from shearing forces during rotation. The protein is Flagellar L-ring protein of Campylobacter jejuni subsp. jejuni serotype O:23/36 (strain 81-176).